A 94-amino-acid chain; its full sequence is Co-chaperonin GroES (94 aa).

The protein belongs to the GroES chaperonin family. Heptamer of 7 subunits arranged in a ring. Interacts with the chaperonin GroEL.

The protein localises to the cytoplasm. Together with the chaperonin GroEL, plays an essential role in assisting protein folding. The GroEL-GroES system forms a nano-cage that allows encapsulation of the non-native substrate proteins and provides a physical environment optimized to promote and accelerate protein folding. GroES binds to the apical surface of the GroEL ring, thereby capping the opening of the GroEL channel. The polypeptide is Co-chaperonin GroES (Bacillus cereus (strain ATCC 14579 / DSM 31 / CCUG 7414 / JCM 2152 / NBRC 15305 / NCIMB 9373 / NCTC 2599 / NRRL B-3711)).